Reading from the N-terminus, the 122-residue chain is Large ribosomal subunit protein uL18 (122 aa).

This sequence belongs to the universal ribosomal protein uL18 family. Part of the 50S ribosomal subunit; part of the 5S rRNA/L5/L18/L25 subcomplex. Contacts the 5S and 23S rRNAs.

This is one of the proteins that bind and probably mediate the attachment of the 5S RNA into the large ribosomal subunit, where it forms part of the central protuberance. The protein is Large ribosomal subunit protein uL18 of Leptospira biflexa serovar Patoc (strain Patoc 1 / Ames).